Consider the following 307-residue polypeptide: Ribonuclease Z (307 aa).

Zn(2+)-binding residues include histidine 63, histidine 65, aspartate 67, histidine 68, histidine 141, aspartate 212, and histidine 270. Aspartate 67 (proton acceptor) is an active-site residue.

It belongs to the RNase Z family. As to quaternary structure, homodimer. Zn(2+) serves as cofactor.

It catalyses the reaction Endonucleolytic cleavage of RNA, removing extra 3' nucleotides from tRNA precursor, generating 3' termini of tRNAs. A 3'-hydroxy group is left at the tRNA terminus and a 5'-phosphoryl group is left at the trailer molecule.. Functionally, zinc phosphodiesterase, which displays some tRNA 3'-processing endonuclease activity. Probably involved in tRNA maturation, by removing a 3'-trailer from precursor tRNA. In Bacillus mycoides (strain KBAB4) (Bacillus weihenstephanensis), this protein is Ribonuclease Z.